A 238-amino-acid polypeptide reads, in one-letter code: ATP synthase subunit a (238 aa).

Transmembrane regions (helical) follow at residues 35-55, 61-81, 94-114, 128-148, 151-171, 190-210, and 211-231; these read SNVI…TLAT, VPSG…SFVV, FLCA…VPGL, ALTV…AGYI, FMGP…ISHL, IVLV…MYFL, and FSLA…IYLK.

It belongs to the ATPase A chain family. As to quaternary structure, F-type ATPases have 2 components, CF(1) - the catalytic core - and CF(0) - the membrane proton channel. CF(1) has five subunits: alpha(3), beta(3), gamma(1), delta(1), epsilon(1). CF(0) has three main subunits: a(1), b(2) and c(9-12). The alpha and beta chains form an alternating ring which encloses part of the gamma chain. CF(1) is attached to CF(0) by a central stalk formed by the gamma and epsilon chains, while a peripheral stalk is formed by the delta and b chains.

It is found in the cell inner membrane. In terms of biological role, key component of the proton channel; it plays a direct role in the translocation of protons across the membrane. The protein is ATP synthase subunit a of Solidesulfovibrio magneticus (strain ATCC 700980 / DSM 13731 / RS-1) (Desulfovibrio magneticus).